The sequence spans 357 residues: UDP-3-O-acylglucosamine N-acyltransferase (357 aa).

Residue His258 is the Proton acceptor of the active site.

Belongs to the transferase hexapeptide repeat family. LpxD subfamily. Homotrimer.

The catalysed reaction is a UDP-3-O-[(3R)-3-hydroxyacyl]-alpha-D-glucosamine + a (3R)-hydroxyacyl-[ACP] = a UDP-2-N,3-O-bis[(3R)-3-hydroxyacyl]-alpha-D-glucosamine + holo-[ACP] + H(+). The protein operates within bacterial outer membrane biogenesis; LPS lipid A biosynthesis. Functionally, catalyzes the N-acylation of UDP-3-O-acylglucosamine using 3-hydroxyacyl-ACP as the acyl donor. Is involved in the biosynthesis of lipid A, a phosphorylated glycolipid that anchors the lipopolysaccharide to the outer membrane of the cell. The protein is UDP-3-O-acylglucosamine N-acyltransferase of Azorhizobium caulinodans (strain ATCC 43989 / DSM 5975 / JCM 20966 / LMG 6465 / NBRC 14845 / NCIMB 13405 / ORS 571).